The chain runs to 409 residues: NADH-quinone oxidoreductase subunit D (409 aa).

The protein belongs to the complex I 49 kDa subunit family. In terms of assembly, NDH-1 is composed of 14 different subunits. Subunits NuoB, C, D, E, F, and G constitute the peripheral sector of the complex.

Its subcellular location is the cell inner membrane. The catalysed reaction is a quinone + NADH + 5 H(+)(in) = a quinol + NAD(+) + 4 H(+)(out). In terms of biological role, NDH-1 shuttles electrons from NADH, via FMN and iron-sulfur (Fe-S) centers, to quinones in the respiratory chain. The immediate electron acceptor for the enzyme in this species is believed to be ubiquinone. Couples the redox reaction to proton translocation (for every two electrons transferred, four hydrogen ions are translocated across the cytoplasmic membrane), and thus conserves the redox energy in a proton gradient. In Helicobacter pylori (strain HPAG1), this protein is NADH-quinone oxidoreductase subunit D.